The primary structure comprises 764 residues: 5-methyltetrahydropteroyltriglutamate--homocysteine methyltransferase (764 aa).

Residues 16-19 and Lys112 each bind 5-methyltetrahydropteroyltri-L-glutamate; that span reads RELK. L-homocysteine contacts are provided by residues 431 to 433 and Glu484; that span reads IGS. L-methionine-binding positions include 431 to 433 and Glu484; that span reads IGS. Residues 515-516 and Trp561 contribute to the 5-methyltetrahydropteroyltri-L-glutamate site; that span reads RC. Asp599 serves as a coordination point for L-homocysteine. Asp599 is an L-methionine binding site. 5-methyltetrahydropteroyltri-L-glutamate is bound at residue Glu605. Residues His641, Cys643, and Glu665 each coordinate Zn(2+). The active-site Proton donor is the His694. Cys726 lines the Zn(2+) pocket.

The protein belongs to the vitamin-B12 independent methionine synthase family. The cofactor is Zn(2+).

The enzyme catalyses 5-methyltetrahydropteroyltri-L-glutamate + L-homocysteine = tetrahydropteroyltri-L-glutamate + L-methionine. The protein operates within amino-acid biosynthesis; L-methionine biosynthesis via de novo pathway; L-methionine from L-homocysteine (MetE route): step 1/1. Functionally, catalyzes the transfer of a methyl group from 5-methyltetrahydrofolate to homocysteine resulting in methionine formation. This chain is 5-methyltetrahydropteroyltriglutamate--homocysteine methyltransferase, found in Paraburkholderia phytofirmans (strain DSM 17436 / LMG 22146 / PsJN) (Burkholderia phytofirmans).